A 778-amino-acid chain; its full sequence is Protein PHOTOPERIODIC CONTROL OF HYPOCOTYL 1 (778 aa).

Disordered regions lie at residues 74 to 95 (QKRE…VGSS), 186 to 283 (HNRG…NSAT), and 316 to 335 (KTSP…KEAS). The span at 198 to 212 (SSKDTQEDGPRKNES) shows a compositional bias: basic and acidic residues. Over residues 230–247 (SGSISSSSTKGKGIKGYS) the composition is skewed to low complexity. A compositionally biased stretch (basic and acidic residues) spans 265 to 275 (PDRENSVDGHQ). A compositionally biased stretch (polar residues) spans 317 to 326 (TSPSDSSETK). The 36-residue stretch at 470-505 (WPLLPNDLLELIMGHLETSFEIFLFRSVCSSWRSVV) folds into the F-box domain.

As to quaternary structure, interacts with light-activated phyB. Binds directly to PIF1 and COP1. Post-translationally, ubiquitinated by COP1 in darkness; this leads to proteasomal degradation. In terms of tissue distribution, mainly expressed in cotyledons, hypocotyls, leaves and roots.

It is found in the nucleus. Together with PCHL, regulates growth and development adaptation to the ambient environment by controlling negatively phytochrome B (phyB) dark reversion, a temperature-dependent thermal relaxation process during which phyB reverts from the active to the inactive state. Contributes to red (R) light-triggered photomorphogenesis. Promotes various light responses such as seed germination, hypocotyl gravitropism and chlorophyll biosynthesis, via direct interaction with PIF1 and COP1. Prevents DNA-binding ability of PIF1 to negatively regulate the expressions of its target genes. Facilitates the physical interaction between phyB and PIF1 and the subsequent light-induced degradation of PIF1. The protein is Protein PHOTOPERIODIC CONTROL OF HYPOCOTYL 1 of Arabidopsis thaliana (Mouse-ear cress).